The following is a 798-amino-acid chain: uncharacterized protein (798 aa).

The signal sequence occupies residues 1–22; it reads MKFKYGAIVFSGLLGVSAILAA. A lipid anchor (N-palmitoyl cysteine) is attached at cysteine 23. Residue cysteine 23 is the site of S-diacylglycerol cysteine attachment. A compositionally biased stretch (basic and acidic residues) spans 178-192; it reads SKGAQKDNKSAEVQR. Disordered stretches follow at residues 178–204, 226–260, 443–463, and 478–515; these read SKGA…TQPL, NGKK…ATSD, EVNA…QSDQ, and SDIK…TPKK. Polar residues predominate over residues 193-204; sequence KSTGQKTVTQPL. Residues 226-235 show a composition bias toward basic and acidic residues; that stretch reads NGKKKEEKKS. Over residues 478-495 the composition is skewed to basic and acidic residues; the sequence is SDIKVKPKTQAESKKSSD. Residues 496–515 are compositionally biased toward polar residues; sequence SKQTANTGKGSNSKQQTPKK.

This sequence belongs to the MG185/MG260 family.

Its subcellular location is the cell membrane. This is an uncharacterized protein from Mycoplasma pneumoniae (strain ATCC 29342 / M129 / Subtype 1) (Mycoplasmoides pneumoniae).